The chain runs to 521 residues: Anthranilate synthase component 1 (521 aa).

Residues Thr40 and 292–294 (PYM) contribute to the L-tryptophan site. 329-330 (GT) provides a ligand contact to chorismate. A Mg(2+)-binding site is contributed by Glu362. Residues Tyr450, Arg470, 484 to 486 (GAG), and Gly486 contribute to the chorismate site. Glu499 contributes to the Mg(2+) binding site.

Belongs to the anthranilate synthase component I family. Heterotetramer consisting of two non-identical subunits: a beta subunit (TrpG) and a large alpha subunit (TrpE). Mg(2+) is required as a cofactor.

The enzyme catalyses chorismate + L-glutamine = anthranilate + pyruvate + L-glutamate + H(+). Its pathway is amino-acid biosynthesis; L-tryptophan biosynthesis; L-tryptophan from chorismate: step 1/5. With respect to regulation, feedback inhibited by tryptophan. Its function is as follows. Part of a heterotetrameric complex that catalyzes the two-step biosynthesis of anthranilate, an intermediate in the biosynthesis of L-tryptophan. In the first step, the glutamine-binding beta subunit (TrpG) of anthranilate synthase (AS) provides the glutamine amidotransferase activity which generates ammonia as a substrate that, along with chorismate, is used in the second step, catalyzed by the large alpha subunit of AS (TrpE) to produce anthranilate. In the absence of TrpG, TrpE can synthesize anthranilate directly from chorismate and high concentrations of ammonia. The sequence is that of Anthranilate synthase component 1 (trpE) from Buchnera aphidicola subsp. Acyrthosiphon pisum (strain APS) (Acyrthosiphon pisum symbiotic bacterium).